Here is a 359-residue protein sequence, read N- to C-terminus: Transaldolase (359 aa).

Catalysis depends on K139, which acts as the Schiff-base intermediate with substrate.

This sequence belongs to the transaldolase family. Type 2 subfamily.

It is found in the cytoplasm. The enzyme catalyses D-sedoheptulose 7-phosphate + D-glyceraldehyde 3-phosphate = D-erythrose 4-phosphate + beta-D-fructose 6-phosphate. It functions in the pathway carbohydrate degradation; pentose phosphate pathway; D-glyceraldehyde 3-phosphate and beta-D-fructose 6-phosphate from D-ribose 5-phosphate and D-xylulose 5-phosphate (non-oxidative stage): step 2/3. In terms of biological role, transaldolase is important for the balance of metabolites in the pentose-phosphate pathway. The sequence is that of Transaldolase from Thiobacillus denitrificans (strain ATCC 25259 / T1).